Consider the following 434-residue polypeptide: Asparagine--tRNA ligase (434 aa).

The protein belongs to the class-II aminoacyl-tRNA synthetase family.

It is found in the cytoplasm. It carries out the reaction tRNA(Asn) + L-asparagine + ATP = L-asparaginyl-tRNA(Asn) + AMP + diphosphate + H(+). The sequence is that of Asparagine--tRNA ligase from Pyrococcus horikoshii (strain ATCC 700860 / DSM 12428 / JCM 9974 / NBRC 100139 / OT-3).